A 137-amino-acid polypeptide reads, in one-letter code: Large ribosomal subunit protein eL28 (137 aa).

S2 bears the N-acetylserine mark. Residues K58 and K65 each participate in a glycyl lysine isopeptide (Lys-Gly) (interchain with G-Cter in SUMO2) cross-link. S115 is subject to Phosphoserine.

This sequence belongs to the eukaryotic ribosomal protein eL28 family. Component of the large ribosomal subunit.

Its subcellular location is the cytoplasm. Functionally, component of the large ribosomal subunit. The ribosome is a large ribonucleoprotein complex responsible for the synthesis of proteins in the cell. The polypeptide is Large ribosomal subunit protein eL28 (Rpl28) (Rattus norvegicus (Rat)).